The sequence spans 158 residues: MPEKIIELFTDGGCRGNPGIGAWGVWLRLAGQERVLWGFVPETTNNRMELTAALRGLEALKRPSAVRVISDSRYLRDGMTQWLAGWQRRGWRTAGGDAVKNRDIWELLAAVAARHQVQWEWVRGHSGHIENERVDALLNRVMDQYAAGGQAREGEGWL.

An RNase H type-1 domain is found at Pro2–Asp143. Mg(2+) is bound by residues Asp11, Glu49, Asp71, and Asp135.

This sequence belongs to the RNase H family. In terms of assembly, monomer. Mg(2+) is required as a cofactor.

Its subcellular location is the cytoplasm. The catalysed reaction is Endonucleolytic cleavage to 5'-phosphomonoester.. Functionally, endonuclease that specifically degrades the RNA of RNA-DNA hybrids. In Acidithiobacillus ferrooxidans (strain ATCC 23270 / DSM 14882 / CIP 104768 / NCIMB 8455) (Ferrobacillus ferrooxidans (strain ATCC 23270)), this protein is Ribonuclease H.